Here is a 2298-residue protein sequence, read N- to C-terminus: Protein Ycf2 (2298 aa).

1638 to 1645 (GSIGTGRS) serves as a coordination point for ATP.

Belongs to the Ycf2 family.

The protein localises to the plastid. Its subcellular location is the chloroplast stroma. In terms of biological role, probable ATPase of unknown function. Its presence in a non-photosynthetic plant (Epifagus virginiana) and experiments in tobacco indicate that it has an essential function which is probably not related to photosynthesis. The sequence is that of Protein Ycf2 from Gossypium barbadense (Sea Island cotton).